The chain runs to 161 residues: Small ribosomal subunit protein uS9 (161 aa).

Belongs to the universal ribosomal protein uS9 family.

The chain is Small ribosomal subunit protein uS9 from Methylobacterium radiotolerans (strain ATCC 27329 / DSM 1819 / JCM 2831 / NBRC 15690 / NCIMB 10815 / 0-1).